The primary structure comprises 138 residues: ATP synthase epsilon chain (138 aa).

It belongs to the ATPase epsilon chain family. In terms of assembly, F-type ATPases have 2 components, CF(1) - the catalytic core - and CF(0) - the membrane proton channel. CF(1) has five subunits: alpha(3), beta(3), gamma(1), delta(1), epsilon(1). CF(0) has three main subunits: a, b and c.

It localises to the cell inner membrane. Functionally, produces ATP from ADP in the presence of a proton gradient across the membrane. This chain is ATP synthase epsilon chain, found in Cupriavidus necator (strain ATCC 17699 / DSM 428 / KCTC 22496 / NCIMB 10442 / H16 / Stanier 337) (Ralstonia eutropha).